Reading from the N-terminus, the 357-residue chain is Phospho-N-acetylmuramoyl-pentapeptide-transferase (357 aa).

Helical transmembrane passes span 4–24, 52–72, 77–97, 115–135, 153–173, 186–206, 228–248, 255–275, 280–300, and 334–354; these read QILFSGVIGLFLTLVGTPLLI, TMGGIAFILATIIAYFMSKVI, PTFSGLLVLGLMAGMGLVGFL, AKMAGQLIVGIAFAVLALQFA, FGWTIGPVLFVIWALFMILAM, LATGAATMVFGAYTFIGVWQF, PLDLAVVASALMGACFGFLWW, IFMGDTGSLALGGALAGLAIC, LLVALLGGLFVLITMSVVIQV, and FWIIQGMCVIVGLGLFYAGWA.

This sequence belongs to the glycosyltransferase 4 family. MraY subfamily. Requires Mg(2+) as cofactor.

The protein resides in the cell membrane. The catalysed reaction is UDP-N-acetyl-alpha-D-muramoyl-L-alanyl-gamma-D-glutamyl-meso-2,6-diaminopimeloyl-D-alanyl-D-alanine + di-trans,octa-cis-undecaprenyl phosphate = di-trans,octa-cis-undecaprenyl diphospho-N-acetyl-alpha-D-muramoyl-L-alanyl-D-glutamyl-meso-2,6-diaminopimeloyl-D-alanyl-D-alanine + UMP. The protein operates within cell wall biogenesis; peptidoglycan biosynthesis. Catalyzes the initial step of the lipid cycle reactions in the biosynthesis of the cell wall peptidoglycan: transfers peptidoglycan precursor phospho-MurNAc-pentapeptide from UDP-MurNAc-pentapeptide onto the lipid carrier undecaprenyl phosphate, yielding undecaprenyl-pyrophosphoryl-MurNAc-pentapeptide, known as lipid I. This Streptomyces avermitilis (strain ATCC 31267 / DSM 46492 / JCM 5070 / NBRC 14893 / NCIMB 12804 / NRRL 8165 / MA-4680) protein is Phospho-N-acetylmuramoyl-pentapeptide-transferase.